Here is a 131-residue protein sequence, read N- to C-terminus: D-ribose pyranase (131 aa).

H20 (proton donor) is an active-site residue. Residues D28, H98, and 120–122 contribute to the substrate site; that span reads YCN.

It belongs to the RbsD / FucU family. RbsD subfamily. Homodecamer.

The protein resides in the cytoplasm. It catalyses the reaction beta-D-ribopyranose = beta-D-ribofuranose. Its pathway is carbohydrate metabolism; D-ribose degradation; D-ribose 5-phosphate from beta-D-ribopyranose: step 1/2. Catalyzes the interconversion of beta-pyran and beta-furan forms of D-ribose. The chain is D-ribose pyranase from Coprothermobacter proteolyticus (strain ATCC 35245 / DSM 5265 / OCM 4 / BT).